The primary structure comprises 399 residues: Probable endo-xylogalacturonan hydrolase A (399 aa).

The N-terminal stretch at 1–19 is a signal peptide; sequence MTFGKAAFLSFSLFGASWA. PbH1 repeat units follow at residues 177-207, 208-229, 231-251, 260-283, and 293-314; these read TTNA…DIGE, STYV…AFKP, CNYL…SVGS, VQNV…KTYP, and VTNV…QIQS. Residue Asp222 is the Proton donor of the active site. His245 is an active-site residue. 2 N-linked (GlcNAc...) asparagine glycosylation sites follow: Asn295 and Asn382.

The protein belongs to the glycosyl hydrolase 28 family.

The protein resides in the secreted. In terms of biological role, pectinolytic enzyme involved in the degradation of xylogalacturonan (xga), a galacturonan backbone heavily substituted with xylose, and which is one important component of the hairy regions of pectin. Activity requires a galacturonic acid backbone substituted with xylose. This Emericella nidulans (strain FGSC A4 / ATCC 38163 / CBS 112.46 / NRRL 194 / M139) (Aspergillus nidulans) protein is Probable endo-xylogalacturonan hydrolase A (xghA).